The sequence spans 644 residues: Sentrin-specific protease 1 (644 aa).

An interaction with CCAR2 region spans residues 1-200 (MDDIADRMRM…REIYRQLLQM (200 aa)). Ser-57, Ser-117, Ser-132, and Ser-157 each carry phosphoserine. Residues 92–117 (QSANGQWRNSTPSSSSSLQKSRNSRS) are disordered. The segment covering 99-117 (RNSTPSSSSSLQKSRNSRS) has biased composition (low complexity). Disordered regions lie at residues 156–184 (PSPSWSGSCRRSLLSPKKTQRRHVSTAEE) and 283–312 (SKDSGTLHHPHHHHSVPHQPDNLAASNTQS). Residues 171–177 (PKKTQRR) carry the Nuclear localization signal motif. Residues 450 to 613 (LTITRKDIQT…GMFACKYADC (164 aa)) form a protease region. Catalysis depends on residues His-533 and Asp-550. Positions 574 to 577 (KKRK) match the Nuclear localization signal motif. The Nucleophile role is filled by Cys-603. The Nuclear localization signal motif lies at 628 to 634 (PYFRKRM). A Nuclear export signal motif is present at residues 635 to 644 (VWEILHRKLL).

The protein belongs to the peptidase C48 family. Interacts with RBM33; promoting ALKBH5 desumoylation and subsequent activation. As to expression, highly expressed in testis. Expressed at lower levels in thymus, pancreas, spleen, liver, ovary and small intestine.

It is found in the nucleus. Its subcellular location is the cytoplasm. Functionally, protease that catalyzes two essential functions in the SUMO pathway. The first is the hydrolysis of an alpha-linked peptide bond at the C-terminal end of the small ubiquitin-like modifier (SUMO) propeptides, SUMO1, SUMO2 and SUMO3 leading to the mature form of the proteins. The second is the deconjugation of SUMO1, SUMO2 and SUMO3 from targeted proteins, by cleaving an epsilon-linked peptide bond between the C-terminal glycine of the mature SUMO and the lysine epsilon-amino group of the target protein. Deconjugates SUMO1 from HIPK2. Deconjugates SUMO1 from HDAC1 and BHLHE40/DEC1, which decreases its transcriptional repression activity. Deconjugates SUMO1 from CLOCK, which decreases its transcriptional activation activity. Deconjugates SUMO2 from MTA1. Inhibits N(6)-methyladenosine (m6A) RNA methylation by mediating SUMO1 deconjugation from METTL3 and ALKBH5: METTL3 inhibits the m6A RNA methyltransferase activity, while ALKBH5 desumoylation promotes m6A demethylation. Desumoylates CCAR2 which decreases its interaction with SIRT1. Deconjugates SUMO1 from GPS2. In Homo sapiens (Human), this protein is Sentrin-specific protease 1 (SENP1).